A 396-amino-acid polypeptide reads, in one-letter code: Putative isochorismate synthase (396 aa).

The protein belongs to the isochorismate synthase family.

The enzyme catalyses chorismate = isochorismate. The protein operates within siderophore biosynthesis; amonabactin biosynthesis. Involved in the synthesis of amonabactin, a phenolate siderophore containing 2,3-dihydroxybenzoic acid (2,3-DHB). This Aeromonas hydrophila protein is Putative isochorismate synthase (amoA).